The following is a 68-amino-acid chain: MKLEEIKKFVAELRGLSQEELAKKENELKKELFDLRFQAAAGQLDQTARLNEVKKQIARIKTVQSEIK.

Belongs to the universal ribosomal protein uL29 family.

This Streptococcus thermophilus (strain ATCC BAA-250 / LMG 18311) protein is Large ribosomal subunit protein uL29.